The chain runs to 109 residues: DNA-binding protein MJ0691 (109 aa).

The protein belongs to the PDCD5 family.

This Methanocaldococcus jannaschii (strain ATCC 43067 / DSM 2661 / JAL-1 / JCM 10045 / NBRC 100440) (Methanococcus jannaschii) protein is DNA-binding protein MJ0691.